The following is a 126-amino-acid chain: Urease subunit beta (126 aa).

It belongs to the urease beta subunit family. As to quaternary structure, heterotrimer of UreA (gamma), UreB (beta) and UreC (alpha) subunits. Three heterotrimers associate to form the active enzyme.

It localises to the cytoplasm. The enzyme catalyses urea + 2 H2O + H(+) = hydrogencarbonate + 2 NH4(+). Its pathway is nitrogen metabolism; urea degradation; CO(2) and NH(3) from urea (urease route): step 1/1. This chain is Urease subunit beta, found in Haloquadratum walsbyi (strain DSM 16790 / HBSQ001).